The sequence spans 208 residues: Coiled-coil domain-containing protein 25 (208 aa).

Residues 1-105 (MVFYFTSSSV…SNLKKTADMD (105 aa)) are Extracellular-facing. The interval 21-25 (KDKYE) is DNA-binding. K23 carries the N6-acetyllysine modification. A helical transmembrane segment spans residues 106–122 (VGQIGFHRQKDVKIVTV). The stretch at 117 to 187 (VKIVTVEKKV…REMDELRSYS (71 aa)) forms a coiled coil. Over 123-208 (EKKVNEILNR…QDGNDSDEFM (86 aa)) the chain is Cytoplasmic. A compositionally biased stretch (basic and acidic residues) spans 144–184 (LAAEKEGRDREERNEKKAQIQEMKRKEKEEMKKKREMDELR). Residues 144–208 (LAAEKEGRDR…QDGNDSDEFM (65 aa)) are disordered. Position 204 is a phosphoserine (S204).

The protein belongs to the CCDC25 family. In terms of assembly, interacts (via cytoplasmic region) with ILK.

Its subcellular location is the cell membrane. The protein localises to the endomembrane system. Transmembrane receptor that senses neutrophil extracellular traps (NETs) and triggers the ILK-PARVB pathway to enhance cell motility. NETs are mainly composed of DNA fibers and are released by neutrophils to bind pathogens during inflammation. Formation of NETs is also associated with cancer metastasis, NET-DNA acting as a chemotactic factor to attract cancer cells. Specifically binds NETs on its extracellular region, in particular the 8-OHdG-enriched DNA present in NETs, and recruits ILK, initiating the ILK-PARVB cascade to induce cytoskeleton rearrangement and directional migration of cells. In the context of cancer, promotes cancer metastasis by sensing NETs and promoting migration of tumor cells. This Mus musculus (Mouse) protein is Coiled-coil domain-containing protein 25.